Reading from the N-terminus, the 508-residue chain is Light-independent protochlorophyllide reductase subunit B (508 aa).

Position 36 (D36) interacts with [4Fe-4S] cluster. The Proton donor role is filled by D294. 429–430 serves as a coordination point for substrate; the sequence is GM.

It belongs to the ChlB/BchB/BchZ family. Protochlorophyllide reductase is composed of three subunits; ChlL, ChlN and ChlB. Forms a heterotetramer of two ChlB and two ChlN subunits. [4Fe-4S] cluster is required as a cofactor.

It carries out the reaction chlorophyllide a + oxidized 2[4Fe-4S]-[ferredoxin] + 2 ADP + 2 phosphate = protochlorophyllide a + reduced 2[4Fe-4S]-[ferredoxin] + 2 ATP + 2 H2O. The protein operates within porphyrin-containing compound metabolism; chlorophyll biosynthesis (light-independent). In terms of biological role, component of the dark-operative protochlorophyllide reductase (DPOR) that uses Mg-ATP and reduced ferredoxin to reduce ring D of protochlorophyllide (Pchlide) to form chlorophyllide a (Chlide). This reaction is light-independent. The NB-protein (ChlN-ChlB) is the catalytic component of the complex. This chain is Light-independent protochlorophyllide reductase subunit B, found in Thermosynechococcus vestitus (strain NIES-2133 / IAM M-273 / BP-1).